Here is a 380-residue protein sequence, read N- to C-terminus: Guanine nucleotide-binding protein alpha-1 subunit (380 aa).

The interval 1–25 (MGSSCSRSHSLSEAETTKNAKSADI) is disordered. Gly-2 is lipidated: N-myristoyl glycine. Residue Cys-5 is the site of S-palmitoyl cysteine attachment. Positions 10 to 25 (SLSEAETTKNAKSADI) are enriched in basic and acidic residues. The G-alpha domain occupies 38-380 (HIHKLLLLGA…ESMRRSREGT (343 aa)). The segment at 41–54 (KLLLLGAGESGKST) is G1 motif. Glu-49, Ser-50, Gly-51, Lys-52, Ser-53, Thr-54, Asp-163, Leu-188, Tyr-189, Thr-194, Gly-222, Asn-288, Lys-289, Asp-291, and Ala-356 together coordinate GTP. Position 53 (Ser-53) interacts with Mg(2+). The tract at residues 186–194 (DVLYARVRT) is G2 motif. Thr-194 contributes to the Mg(2+) binding site. The G3 motif stretch occupies residues 215–224 (YRLYDVGGQR). Residues 284-291 (ILFLNKFD) form a G4 motif region. The segment at 354–359 (TTALDQ) is G5 motif.

Belongs to the G-alpha family. G proteins are composed of 3 units; alpha, beta and gamma. The alpha chain contains the guanine nucleotide binding site. Interacts with COLD1. It depends on Mg(2+) as a cofactor.

It is found in the cell membrane. Functionally, guanine nucleotide-binding proteins (G proteins) are involved as modulators or transducers in various transmembrane signaling systems. May function in a signal transduction pathway required for normal growth and development of internodes, leaves, panicles and seeds. Involved in gibberellin signal transduction. Involved in R gene-mediated disease resistance. Functions upstream of the small GTPase RAC1 in the early steps of signaling. Involved in brassinosteroid response. May not be a signaling molecule in BRI1-mediated perception or transduction. The chain is Guanine nucleotide-binding protein alpha-1 subunit (GPA1) from Oryza sativa subsp. indica (Rice).